The following is a 950-amino-acid chain: Glycine dehydrogenase (decarboxylating) 1 (950 aa).

Residue Lys704 is modified to N6-(pyridoxal phosphate)lysine.

The protein belongs to the GcvP family. As to quaternary structure, the glycine cleavage system is composed of four proteins: P, T, L and H. Pyridoxal 5'-phosphate is required as a cofactor.

It catalyses the reaction N(6)-[(R)-lipoyl]-L-lysyl-[glycine-cleavage complex H protein] + glycine + H(+) = N(6)-[(R)-S(8)-aminomethyldihydrolipoyl]-L-lysyl-[glycine-cleavage complex H protein] + CO2. The glycine cleavage system catalyzes the degradation of glycine. The P protein binds the alpha-amino group of glycine through its pyridoxal phosphate cofactor; CO(2) is released and the remaining methylamine moiety is then transferred to the lipoamide cofactor of the H protein. In Pseudomonas fluorescens (strain Pf0-1), this protein is Glycine dehydrogenase (decarboxylating) 1.